Here is a 181-residue protein sequence, read N- to C-terminus: 6,7-dimethyl-8-ribityllumazine synthase (181 aa).

Residues F23, 61-63 (SFE), and 85-87 (AVI) each bind 5-amino-6-(D-ribitylamino)uracil. 90–91 (QT) serves as a coordination point for (2S)-2-hydroxy-3-oxobutyl phosphate. Residue H93 is the Proton donor of the active site. Residue F118 coordinates 5-amino-6-(D-ribitylamino)uracil. R132 serves as a coordination point for (2S)-2-hydroxy-3-oxobutyl phosphate.

The protein belongs to the DMRL synthase family.

The enzyme catalyses (2S)-2-hydroxy-3-oxobutyl phosphate + 5-amino-6-(D-ribitylamino)uracil = 6,7-dimethyl-8-(1-D-ribityl)lumazine + phosphate + 2 H2O + H(+). Its pathway is cofactor biosynthesis; riboflavin biosynthesis; riboflavin from 2-hydroxy-3-oxobutyl phosphate and 5-amino-6-(D-ribitylamino)uracil: step 1/2. In terms of biological role, catalyzes the formation of 6,7-dimethyl-8-ribityllumazine by condensation of 5-amino-6-(D-ribitylamino)uracil with 3,4-dihydroxy-2-butanone 4-phosphate. This is the penultimate step in the biosynthesis of riboflavin. The protein is 6,7-dimethyl-8-ribityllumazine synthase of Synechococcus elongatus (strain ATCC 33912 / PCC 7942 / FACHB-805) (Anacystis nidulans R2).